The primary structure comprises 397 residues: Elongation factor Tu (397 aa).

In terms of domain architecture, tr-type G spans 10-207 (KPHVNIGTIG…ACDSYIPEPQ (198 aa)). The interval 19 to 26 (GHIDHGKT) is G1. 19-26 (GHIDHGKT) serves as a coordination point for GTP. Threonine 26 provides a ligand contact to Mg(2+). Positions 60–64 (GITIA) are G2. The tract at residues 81–84 (DCPG) is G3. GTP-binding positions include 81–85 (DCPGH) and 136–139 (NKCD). The segment at 136–139 (NKCD) is G4. The tract at residues 174–176 (SAL) is G5.

This sequence belongs to the TRAFAC class translation factor GTPase superfamily. Classic translation factor GTPase family. EF-Tu/EF-1A subfamily. Monomer.

It localises to the cytoplasm. It catalyses the reaction GTP + H2O = GDP + phosphate + H(+). Functionally, GTP hydrolase that promotes the GTP-dependent binding of aminoacyl-tRNA to the A-site of ribosomes during protein biosynthesis. This chain is Elongation factor Tu, found in Nitratidesulfovibrio vulgaris (strain DSM 19637 / Miyazaki F) (Desulfovibrio vulgaris).